We begin with the raw amino-acid sequence, 770 residues long: Amyloid-beta precursor protein (770 aa).

Residues 1-17 (MLPSLALLLLAAWTVRA) form the signal peptide. Residues 18–701 (LEVPTDGNAG…AEDVGSNKGA (684 aa)) are Extracellular-facing. The GFLD subdomain stretch occupies residues 28 to 123 (LLAEPQIAMF…PYRCLVGEFV (96 aa)). Residues 28-189 (LLAEPQIAMF…RGVEFVCCPL (162 aa)) enclose the E1 domain. Intrachain disulfides connect Cys-38/Cys-62, Cys-73/Cys-117, Cys-98/Cys-105, Cys-133/Cys-187, Cys-144/Cys-174, and Cys-158/Cys-186. 96 to 110 (NWCKRGRKQCKTHTH) provides a ligand contact to heparin. A cuBD subdomain region spans residues 131-189 (DKCKFLHQERMDVCETHLHWHTVAKETCSEKSTNLHDYGMLLPCGIDKFRGVEFVCCPL). The copper-binding stretch occupies residues 135 to 155 (FLHQERMDVCETHLHWHTVAK). Residues His-147, His-151, and Tyr-168 each coordinate Cu(2+). The zinc-binding stretch occupies residues 181–188 (GVEFVCCP). Glu-183, Cys-186, and Cys-187 together coordinate Zn(2+). Over residues 196 to 207 (IDSADAEEDDSD) the composition is skewed to acidic residues. The disordered stretch occupies residues 196–283 (IDSADAEEDD…TTTTTTTESV (88 aa)). Ser-198 carries the phosphoserine; by CK2 modification. Residue Ser-206 is modified to Phosphoserine; by CK1. Sulfotyrosine occurs at positions 217 and 262. The segment covering 228 to 264 (VAEEEEVADVEEEEAEDDEDVEDGDEVEEEAEEPYEE) has biased composition (acidic residues). Over residues 268 to 281 (RTTSIATTTTTTTE) the composition is skewed to low complexity. 3 disulfide bridges follow: Cys-291/Cys-341, Cys-300/Cys-324, and Cys-316/Cys-337. The BPTI/Kunitz inhibitor domain maps to 291 to 341 (CSEQAETGPCRAMISRWYFDVTEGKCAPFFYGGCGGNRNNFDTEEYCMAVC). Tyr-336 carries the sulfotyrosine modification. The short motif at 344–365 (VSSQSLLKTTSEPLPQDPVKLP) is the OX-2 element. The region spanning 374–565 (AVDKYLETPG…EEIQDEVDEL (192 aa)) is the E2 domain. The tract at residues 391–423 (FQKAKERLEAKHRERMSQVMREWEEAERQAKNL) is heparin-binding. Ser-441 is subject to Phosphoserine. A heparin-binding region spans residues 491–522 (FNMLKKYVRAEQKDRQHTLKHFEHVRMVDPKK). At Tyr-497 the chain carries Phosphotyrosine. The interval 523–540 (AAQIRSQVMTHLRVIYER) is collagen-binding. Residues Asn-542 and Asn-571 are each glycosylated (N-linked (GlcNAc...) asparagine). O-linked (Xyl...) (chondroitin sulfate) serine; in L-APP isoforms glycosylation occurs at Ser-656. The Cu(2+) site is built by His-677 and His-685. The Zn(2+) site is built by His-677 and His-685. Positions 695–722 (VGSNKGAIIGLMVGGVVIATVIVITLVM) are interaction with PSEN1. A helical transmembrane segment spans residues 702-722 (IIGLMVGGVVIATVIVITLVM). Topologically, residues 723–770 (LKKKQYTSIHHGVVEVDAAVTPEERHLSKMQQNGYENPTYKFFEQMQN) are cytoplasmic. The Basolateral sorting signal signature appears at 724–734 (KKKQYTSIHHG). The residue at position 729 (Thr-729) is a Phosphothreonine. Ser-730 bears the Phosphoserine; by APP-kinase I mark. The tract at residues 732 to 751 (HHGVVEVDAAVTPEERHLSK) is interaction with G(o)-alpha. Position 743 is a phosphothreonine; by CDK5 and MAPK10 (Thr-743). A required for the interaction with KIF5B and for anterograde transport in axons region spans residues 756 to 770 (GYENPTYKFFEQMQN). A Phosphotyrosine; by ABL1 modification is found at Tyr-757. Positions 757-762 (YENPTY) match the YENPXY motif; contains endocytosis signal motif. Lys-763 participates in a covalent cross-link: Glycyl lysine isopeptide (Lys-Gly) (interchain with G-Cter in ubiquitin).

Belongs to the APP family. As to quaternary structure, binds, via its C-terminus, to the PID domain of several cytoplasmic proteins, including APBB family members, the APBA family, MAPK8IP1, SHC1 and NUMB and DAB1. Binding to DAB1 inhibits its serine phosphorylation. Interacts (via NPXY motif) with DAB2 (via PID domain); the interaction is impaired by tyrosine phosphorylation of the NPXY motif. Also interacts with GPCR-like protein BPP, APPBP1, IB1, KNS2 (via its TPR domains), APPBP2 (via BaSS) and DDB1. In vitro, it binds MAPT via the MT-binding domains. Associates with microtubules in the presence of ATP and in a kinesin-dependent manner. Interacts, through a C-terminal domain, with GNAO1. Amyloid-beta protein 42 binds CHRNA7 in hippocampal neurons. Amyloid-beta associates with HADH2. Interacts with CPEB1, ANKS1B and AGER. Interacts with ITM2B. Interacts with ITM2C. Interacts with IDE. Can form homodimers; dimerization is enhanced in the presence of Cu(2+) ions. Can form homodimers; this is promoted by heparin binding. Amyloid-beta protein 40 interacts with S100A9. CTF-alpha product of APP interacts with GSAP. Isoform APP695 interacts with SORL1 (via N-terminal ectodomain); this interaction retains APP in the trans-Golgi network and reduces processing into soluble APP-alpha and amyloid-beta peptides. The C99 fragment also interacts with SORL1. Isoform APP751 interacts with SORL1. Isoform APP770 interacts with SORL1. Interacts with PLD3. Interacts with VDAC1. Interacts with NSG1; could regulate APP processing. Amyloid-beta protein 42 interacts with FPR2. Interacts with SYT7. Interacts (via transmembrane region) with PSEN1; the interaction is direct. Interacts with LRRK2. Interacts (via cytoplasmic domain) with KIF5B. Interacts (via C-terminus) with APBB2/FE65L1 (via C-terminus). Interacts (via intracellular domain) with APBB3. Proteolytically processed under normal cellular conditions. Cleavage either by alpha-secretase, beta-secretase or theta-secretase leads to generation and extracellular release of soluble APP peptides, S-APP-alpha and S-APP-beta, and the retention of corresponding membrane-anchored C-terminal fragments, C80, C83 and C99. Subsequent processing of C80 and C83 by gamma-secretase yields P3 peptides. This is the major secretory pathway and is non-amyloidogenic. Alternatively, presenilin/nicastrin-mediated gamma-secretase processing of C99 releases the amyloid-beta proteins, amyloid-beta protein 40 and amyloid-beta protein 42, major components of amyloid plaques, and the cytotoxic C-terminal fragments, gamma-CTF(50), gamma-CTF(57) and gamma-CTF(59). PSEN1 cleavage is more efficient with C83 than with C99 as substrate (in vitro). Amyloid-beta protein 40 and Amyloid-beta protein 42 are cleaved by ACE. Many other minor amyloid-beta peptides, amyloid-beta 1-X peptides, are found in cerebral spinal fluid (CSF) including the amyloid-beta X-15 peptides, produced from the cleavage by alpha-secretase. In terms of processing, proteolytically cleaved by caspases during neuronal apoptosis. Cleavage at Asp-739 by either caspase-3, -8 or -9 results in the production of the neurotoxic C31 peptide and the increased production of amyloid-beta peptides. Post-translationally, N-glycosylated. O-glycosylated. O-linkage of chondroitin sulfate to the L-APP isoforms produces the APP proteoglycan core proteins, the appicans. The chondroitin sulfate chain of appicans contains 4-O-sulfated galactose in the linkage region and chondroitin sulfate E in the repeated disaccharide region. In terms of processing, phosphorylation in the C-terminal on tyrosine, threonine and serine residues is neuron-specific. Phosphorylation can affect APP processing, neuronal differentiation and interaction with other proteins. Phosphorylated on Thr-743 in neuronal cells by Cdc5 kinase and Mapk10, in dividing cells by Cdc2 kinase in a cell-cycle dependent manner with maximal levels at the G2/M phase and, in vitro, by GSK-3-beta. The Thr-743 phosphorylated form causes a conformational change which reduces binding of Fe65 family members. In dopaminergic (DA) neurons, phosphorylation on Thr-743 by LRKK2 promotes the production and the nuclear translocation of the APP intracellular domain (AICD) which induces DA neuron apoptosis. Phosphorylation on Tyr-757 is required for SHC binding. Phosphorylated in the extracellular domain by casein kinases on both soluble and membrane-bound APP. This phosphorylation is inhibited by heparin. Post-translationally, extracellular binding and reduction of copper, results in a corresponding oxidation of Cys-144 and Cys-158, and the formation of a disulfide bond. Trophic-factor deprivation triggers the cleavage of surface APP by beta-secretase to release sAPP-beta which is further cleaved to release an N-terminal fragment of APP (N-APP). In terms of processing, amyloid-beta peptides are degraded by IDE. Post-translationally, sulfated on tyrosine residues. As to expression, expressed in the brain. In the brain, non-L-APP isoforms are expressed in neurons, isoform APP695 being the predominant form. In astrocytes and microglial cells, almost 50% is L-isoform (appican).

It is found in the cell membrane. The protein resides in the membrane. It localises to the perikaryon. Its subcellular location is the cell projection. The protein localises to the growth cone. It is found in the clathrin-coated pit. The protein resides in the early endosome. It localises to the cytoplasmic vesicle. Its subcellular location is the endoplasmic reticulum. The protein localises to the golgi apparatus. It is found in the cell surface. The protein resides in the nucleus. It localises to the cytoplasm. Its subcellular location is the secreted. Functions as a cell surface receptor and performs physiological functions on the surface of neurons relevant to neurite growth, neuronal adhesion and axonogenesis. Interaction between APP molecules on neighboring cells promotes synaptogenesis. Involved in cell mobility and transcription regulation through protein-protein interactions. Can promote transcription activation through binding to APBB1-KAT5 and inhibit Notch signaling through interaction with Numb. Couples to apoptosis-inducing pathways such as those mediated by G(o) and JIP. Inhibits G(o)-alpha ATPase activity. Acts as a kinesin I membrane receptor, mediating the axonal transport of beta-secretase and presenilin 1. By acting as a kinesin I membrane receptor, plays a role in axonal anterograde transport of cargo towards synapses in axons. May be involved in copper homeostasis/oxidative stress through copper ion reduction. Can regulate neurite outgrowth through binding to components of the extracellular matrix such as heparin and collagen I and IV. The splice isoforms that contain the BPTI domain possess protease inhibitor activity. Induces a AGER-dependent pathway that involves activation of p38 MAPK, resulting in internalization of amyloid-beta peptide and leading to mitochondrial dysfunction in cultured mitochondrial dysfunction in cultured cortical neurons. Provides Cu(2+) ions for GPC1 which are required for release of nitric oxide (NO) and subsequent degradation of the heparan sulfate chains on GPC1. Its function is as follows. Amyloid-beta peptides are lipophilic metal chelators with metal-reducing activity. Binds transient metals such as copper, zinc and iron. Rat and mouse amyloid-beta peptides bind only weakly transient metals and have little reducing activity due to substitutions of transient metal chelating residues. Amyloid-beta protein 42 may activate mononuclear phagocytes in the brain and elicits inflammatory responses. Promotes both tau aggregation and TPK II-mediated phosphorylation. Also binds GPC1 in lipid rafts. Functionally, appicans elicit adhesion of neural cells to the extracellular matrix and may regulate neurite outgrowth in the brain. In terms of biological role, the gamma-CTF peptides as well as the caspase-cleaved peptides, including C31, are potent enhancers of neuronal apoptosis. The polypeptide is Amyloid-beta precursor protein (Rattus norvegicus (Rat)).